The following is a 519-amino-acid chain: MNEEPHAHENLVAKAQRSGDADPEVASTASEKQRSSGASAIAVGTEFPGNPQASRPQSLGMYLLEPFILILLFAYNFSSTVLKNEVIYQSCTAGFGYPDSVCQLLGTKNITNETKRIEEQVQPYAAQVTLAMRLVECFIPAFCGLFAGSWADHYGRKPLLMCSFLGYGLQYLISAAIAYCAMYTQGLVSPWWYVLSIVPLSCLGSSVTYSVAAVCFIADVSGGKVRSYRMIAYELAIYVGLLLGSLGSGYAYEATDAYIVFSISAVCIFTALFLMALLLPESLPARNRTLSTPTTDTSVVSMLKSLWSTCSKPREHQNRFMLTTIMVVLLLTAFVSDGSNSVFYKFMRIKFHWTVKQFTEYETVGILVPAVAGSGGVLFIWSLRKCTNSAILWLALVSLLSHCSSSLMKGFALESWQIYVAIGLGVFKSLVNPMCRTMITNLLPADERGKIFALLGVLQALSPLISSTLYVAIYTRTLNTEPGIFNVFSAFLFGIGIILLGTVWHKKSRNLVYYEPVFK.

Over residues 1-11 the composition is skewed to basic and acidic residues; it reads MNEEPHAHENL. The disordered stretch occupies residues 1-51; sequence MNEEPHAHENLVAKAQRSGDADPEVASTASEKQRSSGASAIAVGTEFPGNP. Residues 27–38 show a composition bias toward polar residues; it reads STASEKQRSSGA. 11 helical membrane passes run 58–78, 128–148, 159–179, 197–217, 230–250, 259–279, 320–340, 363–383, 390–408, 451–471, and 484–504; these read SLGM…YNFS, VTLA…LFAG, LLMC…AIAY, IVPL…VCFI, MIAY…GSGY, IVFS…ALLL, FMLT…DGSN, TVGI…IWSL, AILW…SSLM, IFAL…TLYV, and IFNV…GTVW.

It belongs to the major facilitator superfamily. SLC46 family. In terms of tissue distribution, expressed in Malpighian tubules.

The protein resides in the cytoplasmic vesicle. It is found in the phagosome membrane. The enzyme catalyses N-acetyl-beta-D-glucosaminyl-(1-&gt;4)-1,6-anhydro-N-acetyl-beta-D-muramoyl-L-alanyl-gamma-D-glutamyl-meso-2,6-diaminopimeloyl-D-alanine(out) + n H(+)(out) = N-acetyl-beta-D-glucosaminyl-(1-&gt;4)-1,6-anhydro-N-acetyl-beta-D-muramoyl-L-alanyl-gamma-D-glutamyl-meso-2,6-diaminopimeloyl-D-alanine(in) + n H(+)(in). In terms of biological role, putative proton-coupled transporter that delivers pathogen-associated molecular patterns to cytosolic pattern recognition receptors as part of the innate immune response to microbes. Likely transports anhydro-muropeptides that contain the amino acid diaminopimelic acid (DAP-type peptidoglycan muropeptides) such as tracheal toxin (TCT), common in Gram-negative bacteria. May transport TCT across the phagosome membrane for cytosolic recognition by PGRP-LE, triggering the activation of imd/Relish pathway and production of antimicrobial peptides. The transport mechanism, its electrogenicity and stoichiometry remain to be elucidated. The sequence is that of Probable peptidoglycan muropeptide transporter SLC46 (SLC46) from Drosophila melanogaster (Fruit fly).